Here is a 228-residue protein sequence, read N- to C-terminus: DNA repair protein RecO (228 aa).

Belongs to the RecO family.

In terms of biological role, involved in DNA repair and RecF pathway recombination. This is DNA repair protein RecO from Mannheimia succiniciproducens (strain KCTC 0769BP / MBEL55E).